We begin with the raw amino-acid sequence, 335 residues long: Trans-3-hydroxy-L-proline dehydratase (335 aa).

The active-site Proton acceptor is the C91. Residues 92–93 (GH) and 256–257 (GS) contribute to the substrate site.

It belongs to the proline racemase family. Homodimer.

The catalysed reaction is trans-3-hydroxy-L-proline = 1-pyrroline-2-carboxylate + H2O. Its pathway is amino-acid degradation. Catalyzes the dehydration of trans-3-hydroxy-L-proline (t3LHyp) to Delta(1)-pyrroline-2-carboxylate (Pyr2C). Together with LhpI, is involved in a t3LHyp degradation pathway to L-proline, which allows A.brasilense to grow on t3LHyp as a sole carbon source. The chain is Trans-3-hydroxy-L-proline dehydratase from Azospirillum brasilense.